Consider the following 147-residue polypeptide: LDHNNLTRMPGPLPRSLRELHLDHNQISRVPNNALEGLENLTALYLQHNEIQEVGSSMRGLRSLILLDLSYNHLRRVPDGLPSALEQLYLEHNNVYTVPDSYFRGSPKLLYVRLSHNSLTNSGLASNTFNSSSLLELDLSYNQLQKI.

LRR repeat units follow at residues 1–15 (LDHNNLTRMPGPLPR), 16–37 (SLRELHLDHNQISRVPNNALEG), 40–61 (NLTALYLQHNEIQEVGSSMRGL), 63–84 (SLILLDLSYNHLRRVPDGLPSA), 85–105 (LEQLYLEHNNVYTVPDSYFRG), and 108–128 (KLLYVRLSHNSLTNSGLASNT). A glycan (N-linked (GlcNAc...) asparagine) is linked at N5. Residue N40 is glycosylated (N-linked (GlcNAc...) asparagine). N130 carries an N-linked (GlcNAc...) asparagine glycan. The stretch at 133 to 147 (SLLELDLSYNQLQKI) is one LRR 7 repeat.

The protein belongs to the small leucine-rich proteoglycan (SLRP) family. SLRP class II subfamily. In terms of assembly, binds to type I and type II collagen. Binds keratan sulfate chains. Post-translationally, sulfated on tyrosine residues. In terms of processing, the N-terminus is blocked by a pyrrolidone carboxylic acid generated by post-translational modification of N-terminal glutamine.

It is found in the secreted. The protein localises to the extracellular space. Its subcellular location is the extracellular matrix. Its function is as follows. Affects the rate of fibrils formation. May have a primary role in collagen fibrillogenesis. The sequence is that of Fibromodulin (FMOD) from Oryctolagus cuniculus (Rabbit).